Consider the following 433-residue polypeptide: Methylenetetrahydrofolate--tRNA-(uracil-5-)-methyltransferase TrmFO (433 aa).

8–13 (GAGLAG) is a binding site for FAD.

Belongs to the MnmG family. TrmFO subfamily. FAD serves as cofactor.

Its subcellular location is the cytoplasm. The catalysed reaction is uridine(54) in tRNA + (6R)-5,10-methylene-5,6,7,8-tetrahydrofolate + NADH + H(+) = 5-methyluridine(54) in tRNA + (6S)-5,6,7,8-tetrahydrofolate + NAD(+). The enzyme catalyses uridine(54) in tRNA + (6R)-5,10-methylene-5,6,7,8-tetrahydrofolate + NADPH + H(+) = 5-methyluridine(54) in tRNA + (6S)-5,6,7,8-tetrahydrofolate + NADP(+). Functionally, catalyzes the folate-dependent formation of 5-methyl-uridine at position 54 (M-5-U54) in all tRNAs. This chain is Methylenetetrahydrofolate--tRNA-(uracil-5-)-methyltransferase TrmFO, found in Carboxydothermus hydrogenoformans (strain ATCC BAA-161 / DSM 6008 / Z-2901).